Reading from the N-terminus, the 467-residue chain is MSLSLWQQCLARLQDELPATEFSMWIRPLQAELSDNTLALYAPNRFVLDWVRDKYLNNINGLLTSFCGADAPQLRFEVGTKPVTQTPQAAVTSNVAAPAQVAQTQPQRAAPSTRSGWDNVPAPAEPTYRSNVNVKHTFDNFVEGKSNQLARAAARQVADNPGGAYNPLFLYGGTGLGKTHLLHAVGNGIMARKPNAKVVYMHSERFVQDMVKALQNNAIEEFKRYYRSVDALLIDDIQFFANKERSQEEFFHTFNALLEGNQQIILTSDRYPKEINGVEDRLKSRFGWGLTVAIEPPELETRVAILMKKADENDIRLPGEVAFFIAKRLRSNVRELEGALNRVIANANFTGRAITIDFVREALRDLLALQEKLVTIDNIQKTVAEYYKIKVADLLSKRRSRSVARPRQMAMALAKELTIHSLPEIGDAFGGRDHTTVLHACRKIEQLREESHDIKEDFSNLIRTLSS.

Residues 1-90 (MSLSLWQQCL…KPVTQTPQAA (90 aa)) are domain I, interacts with DnaA modulators. A domain II region spans residues 91-130 (VTSNVAAPAQVAQTQPQRAAPSTRSGWDNVPAPAEPTYRS). Residues 98–111 (PAQVAQTQPQRAAP) are compositionally biased toward low complexity. Residues 98–119 (PAQVAQTQPQRAAPSTRSGWDN) form a disordered region. Residues 131 to 347 (NVNVKHTFDN…GALNRVIANA (217 aa)) form a domain III, AAA+ region region. Gly-175, Gly-177, Lys-178, and Thr-179 together coordinate ATP. A domain IV, binds dsDNA region spans residues 348–467 (NFTGRAITID…FSNLIRTLSS (120 aa)).

It belongs to the DnaA family. Oligomerizes as a right-handed, spiral filament on DNA at oriC.

The protein resides in the cytoplasm. Functionally, plays an essential role in the initiation and regulation of chromosomal replication. ATP-DnaA binds to the origin of replication (oriC) to initiate formation of the DNA replication initiation complex once per cell cycle. Binds the DnaA box (a 9 base pair repeat at the origin) and separates the double-stranded (ds)DNA. Forms a right-handed helical filament on oriC DNA; dsDNA binds to the exterior of the filament while single-stranded (ss)DNA is stabiized in the filament's interior. The ATP-DnaA-oriC complex binds and stabilizes one strand of the AT-rich DNA unwinding element (DUE), permitting loading of DNA polymerase. After initiation quickly degrades to an ADP-DnaA complex that is not apt for DNA replication. Binds acidic phospholipids. The protein is Chromosomal replication initiator protein DnaA of Shigella boydii serotype 4 (strain Sb227).